A 210-amino-acid polypeptide reads, in one-letter code: Peptidyl-tRNA hydrolase (210 aa).

Position 14 (tyrosine 14) interacts with tRNA. Histidine 19 serves as the catalytic Proton acceptor. Residues phenylalanine 64, asparagine 66, and asparagine 112 each contribute to the tRNA site.

The protein belongs to the PTH family. In terms of assembly, monomer.

The protein resides in the cytoplasm. It catalyses the reaction an N-acyl-L-alpha-aminoacyl-tRNA + H2O = an N-acyl-L-amino acid + a tRNA + H(+). Its function is as follows. Hydrolyzes ribosome-free peptidyl-tRNAs (with 1 or more amino acids incorporated), which drop off the ribosome during protein synthesis, or as a result of ribosome stalling. In terms of biological role, catalyzes the release of premature peptidyl moieties from peptidyl-tRNA molecules trapped in stalled 50S ribosomal subunits, and thus maintains levels of free tRNAs and 50S ribosomes. This is Peptidyl-tRNA hydrolase from Methylorubrum populi (strain ATCC BAA-705 / NCIMB 13946 / BJ001) (Methylobacterium populi).